A 922-amino-acid chain; its full sequence is Cell surface glycoprotein 2 (922 aa).

The N-terminal stretch at 1-23 (MTGNSDKVRSLFLTALMVFSVFA) is a signal peptide. Residues N37, N56, N110, N220, N251, N262, and N292 are each glycosylated (N-linked (GlcNAc...) asparagine). An N-linked (GalNAc...) asparagine glycan is attached at N307. N319, N344, N396, N437, N490, N523, N557, N574, N587, N616, N700, N717, N809, N838, and N847 each carry an N-linked (GlcNAc...) asparagine glycan. The segment at 816–899 (PHQDTNGNEE…GTETTEAEGP (84 aa)) is disordered. Positions 835–850 (YTQNGSAVTDSANVTV) are enriched in polar residues. Residues 853 to 887 (EEPEDTPEDTPEDTPEDTPEDTPEDTPADTPEDTP) are compositionally biased toward acidic residues. A compositionally biased stretch (low complexity) spans 888-899 (DTGTETTEAEGP). A helical membrane pass occupies residues 898–918 (GPGFTAAIALIALVAAALLAV). Residues 899 to 901 (PGF) carry the PGF sorting signal motif.

This sequence belongs to the halobacterial S-layer protein family. N-glycosylated on Asn-307; this N-linked glycan is a branched trisaccharide containing 2-amino-6-sulfo-2,6-dideoxy-glucose (sulfoquinovosamine). Post-translationally, O-glycosylated on Thr residues within the DTPE repeats in the C-terminal region; glycans consist of Glc-Gal disaccharides. In terms of processing, cleaved by the archaeosortase ArtA at the C-terminus, with removal of a short hydrophobic segment. Lipidation.

It localises to the secreted. The protein resides in the cell wall. Its subcellular location is the S-layer. It is found in the cell membrane. Its function is as follows. S-layer protein. The S-layer is a paracrystalline mono-layered assembly of proteins which coat the surface of the cell. In H.hispanica, the S-layer contains two different glycoproteins, Slg1 and Slg2, which share highly similar amino acid sequences. This chain is Cell surface glycoprotein 2, found in Haloarcula hispanica (strain ATCC 33960 / DSM 4426 / JCM 8911 / NBRC 102182 / NCIMB 2187 / VKM B-1755).